A 361-amino-acid polypeptide reads, in one-letter code: Phospho-N-acetylmuramoyl-pentapeptide-transferase (361 aa).

10 helical membrane-spanning segments follow: residues 21–41, 74–94, 97–117, 132–152, 168–188, 199–219, 239–259, 264–284, 288–308, and 339–359; these read YLTV…LWIG, MGGI…ANLA, YVWF…VDDY, WKYF…YAIG, VMPQ…VGTG, GLAI…AWAT, LVIF…FNTY, FMGD…AVLV, FLLV…ILQV, and VIIR…ITLK.

This sequence belongs to the glycosyltransferase 4 family. MraY subfamily. Mg(2+) is required as a cofactor.

The protein resides in the cell inner membrane. It carries out the reaction UDP-N-acetyl-alpha-D-muramoyl-L-alanyl-gamma-D-glutamyl-meso-2,6-diaminopimeloyl-D-alanyl-D-alanine + di-trans,octa-cis-undecaprenyl phosphate = di-trans,octa-cis-undecaprenyl diphospho-N-acetyl-alpha-D-muramoyl-L-alanyl-D-glutamyl-meso-2,6-diaminopimeloyl-D-alanyl-D-alanine + UMP. The protein operates within cell wall biogenesis; peptidoglycan biosynthesis. In terms of biological role, catalyzes the initial step of the lipid cycle reactions in the biosynthesis of the cell wall peptidoglycan: transfers peptidoglycan precursor phospho-MurNAc-pentapeptide from UDP-MurNAc-pentapeptide onto the lipid carrier undecaprenyl phosphate, yielding undecaprenyl-pyrophosphoryl-MurNAc-pentapeptide, known as lipid I. The sequence is that of Phospho-N-acetylmuramoyl-pentapeptide-transferase from Histophilus somni (strain 129Pt) (Haemophilus somnus).